The following is a 368-amino-acid chain: Glutaminyl-peptide cyclotransferase (368 aa).

The N-terminal stretch at Met-1–Ala-23 is a signal peptide. A glycan (N-linked (GlcNAc...) asparagine) is linked at Asn-53. An intrachain disulfide couples Cys-143 to Cys-169. Asp-164 contributes to the Zn(2+) binding site. The Proton acceptor role is filled by Glu-207. Residue Glu-208 coordinates Zn(2+). Residue Asp-254 is the Proton acceptor of the active site. N-linked (GlcNAc...) asparagine glycosylation occurs at Asn-292. His-336 contacts Zn(2+). Asn-352 carries N-linked (GlcNAc...) asparagine glycosylation.

It belongs to the glutaminyl-peptide cyclotransferase family. Expressed by the venom gland.

It localises to the secreted. The enzyme catalyses N-terminal L-glutaminyl-[peptide] = N-terminal 5-oxo-L-prolyl-[peptide] + NH4(+). Responsible for the biosynthesis of pyroglutamyl peptides. Has a bias against acidic and tryptophan residues adjacent to the N-terminal glutaminyl residue and a lack of importance of chain length after the second residue. Also catalyzes N-terminal pyroglutamate formation. This is Glutaminyl-peptide cyclotransferase (QPCT) from Boiga dendrophila (Mangrove snake).